A 269-amino-acid chain; its full sequence is Tryptophan synthase alpha chain (269 aa).

Catalysis depends on proton acceptor residues glutamate 50 and aspartate 61.

This sequence belongs to the TrpA family. Tetramer of two alpha and two beta chains.

It catalyses the reaction (1S,2R)-1-C-(indol-3-yl)glycerol 3-phosphate + L-serine = D-glyceraldehyde 3-phosphate + L-tryptophan + H2O. It functions in the pathway amino-acid biosynthesis; L-tryptophan biosynthesis; L-tryptophan from chorismate: step 5/5. Functionally, the alpha subunit is responsible for the aldol cleavage of indoleglycerol phosphate to indole and glyceraldehyde 3-phosphate. The sequence is that of Tryptophan synthase alpha chain from Francisella tularensis subsp. holarctica (strain FTNF002-00 / FTA).